A 231-amino-acid chain; its full sequence is Putative aminodeoxychorismate lyase (231 aa).

It belongs to the class-IV pyridoxal-phosphate-dependent aminotransferase family. Pyridoxal 5'-phosphate is required as a cofactor.

It localises to the cytoplasm. Its subcellular location is the nucleus. It catalyses the reaction 4-amino-4-deoxychorismate = 4-aminobenzoate + pyruvate + H(+). It functions in the pathway cofactor biosynthesis; tetrahydrofolate biosynthesis; 4-aminobenzoate from chorismate: step 2/2. In terms of biological role, converts 4-amino-4-deoxychorismate into 4-aminobenzoate (PABA) and pyruvate. This chain is Putative aminodeoxychorismate lyase, found in Schizosaccharomyces pombe (strain 972 / ATCC 24843) (Fission yeast).